The sequence spans 125 residues: Larval cuticle protein LCP-14 (125 aa).

The signal sequence occupies residues 1–16 (MKSFIVALCVVGCVLA). The Chitin-binding type R&amp;R domain maps to 33–102 (EGSYNYAFES…PQADFLPTPP (70 aa)).

Component of the cuticle of the larva of tobacco hornworm. The polypeptide is Larval cuticle protein LCP-14 (LCP-14) (Manduca sexta (Tobacco hawkmoth)).